Reading from the N-terminus, the 79-residue chain is Anti-insect Ac4 (79 aa).

Residues 1-17 (MISLSLLLMIGVESVRD) form the signal peptide. The 60-residue stretch at 18–77 (GYIVDFKNCVYRCVPPCDGLCKKNGGKGGSCSFLIGSGLACWCNALPDNVPIKDPLHKCP) folds into the LCN-type CS-alpha/beta domain. 4 disulfides stabilise this stretch: cysteine 26/cysteine 76, cysteine 30/cysteine 48, cysteine 34/cysteine 58, and cysteine 38/cysteine 60.

This sequence belongs to the long (4 C-C) scorpion toxin superfamily. Sodium channel inhibitor family. Alpha subfamily. In terms of tissue distribution, expressed by the venom gland.

It localises to the secreted. Its function is as follows. Alpha toxins bind voltage-independently at site-3 of sodium channels (Nav) and inhibit the inactivation of the activated channels, thereby blocking neuronal transmission. This protein is weakly toxic against insects (ED(50)&gt;2 ug per 100 mg of blowfly larvae), but is inactive against mammalian sodium channels (rNav1.2a, and rNav1.4). The polypeptide is Anti-insect Ac4 (Androctonus crassicauda (Arabian fat-tailed scorpion)).